The chain runs to 101 residues: Large ribosomal subunit protein eL30 (101 aa).

The protein belongs to the eukaryotic ribosomal protein eL30 family.

The polypeptide is Large ribosomal subunit protein eL30 (rpl30e) (Thermococcus celer).